We begin with the raw amino-acid sequence, 1259 residues long: Protein retinal degeneration B (1259 aa).

The tract at residues 268-378 (GGGEECSDDS…SKGALHSPVG (111 aa)) is disordered. 2 positions are modified to phosphoserine: serine 274 and serine 277. Over residues 284–293 (STAATAASTT) the composition is skewed to low complexity. Positions 318 to 335 (SSDEEGEEEEDDDEDEND) are enriched in acidic residues. The segment covering 347-363 (QGGSAQRSRSQSIQMAQ) has biased composition (low complexity). A phosphoserine mark is found at serine 401, serine 403, and serine 434. Disordered stretches follow at residues 427–454 (LLGE…GNSR), 472–500 (RGNK…STPS), and 660–692 (SQPG…NSRL). Residues 663 to 678 (GTASGASNSGGDAATN) show a composition bias toward low complexity. Positions 679–689 (INTHNPLSPRN) are enriched in polar residues. Positions 730–913 (LDFEVCDFFM…IAFILRQIGK (184 aa)) constitute a DDHD domain.

The protein belongs to the PtdIns transfer protein family. PI transfer class IIA subfamily. Expressed in adult heads, not detected in bodies.

The catalysed reaction is a 1,2-diacyl-sn-glycero-3-phospho-(1D-myo-inositol)(in) = a 1,2-diacyl-sn-glycero-3-phospho-(1D-myo-inositol)(out). The enzyme catalyses a 1,2-diacyl-sn-glycero-3-phosphate(in) = a 1,2-diacyl-sn-glycero-3-phosphate(out). Catalyzes the transfer of phosphatidylinositol (PI) and phosphatidic acid (PA) between membranes. May control phosphatidylinositol concentration in transport vesicles from the subrhabdomeric cisternae (SRC) to the rhabdomere. May function as a calcium transporter. This is Protein retinal degeneration B (rdgB) from Drosophila melanogaster (Fruit fly).